A 123-amino-acid chain; its full sequence is Late histone H2B.L3 (123 aa).

Positions 1 to 10 (MPAKAQAAGK) are enriched in low complexity. Residues 1-32 (MPAKAQAAGKKGSKKAKAPKPSGDKKRRRKRK) form a disordered region. The O-linked (GlcNAc) serine glycan is linked to S110. K118 participates in a covalent cross-link: Glycyl lysine isopeptide (Lys-Gly) (interchain with G-Cter in ubiquitin).

It belongs to the histone H2B family. As to quaternary structure, the nucleosome is a histone octamer containing two molecules each of H2A, H2B, H3 and H4 assembled in one H3-H4 heterotetramer and two H2A-H2B heterodimers. The octamer wraps approximately 147 bp of DNA. In terms of processing, monoubiquitination of Lys-118 gives a specific tag for epigenetic transcriptional activation and is also prerequisite for histone H3 'Lys-4' and 'Lys-79' methylation. GlcNAcylation at Ser-110 promotes monoubiquitination of Lys-118. It fluctuates in response to extracellular glucose, and associates with transcribed genes.

Its subcellular location is the nucleus. It is found in the chromosome. Core component of nucleosome. Nucleosomes wrap and compact DNA into chromatin, limiting DNA accessibility to the cellular machineries which require DNA as a template. Histones thereby play a central role in transcription regulation, DNA repair, DNA replication and chromosomal stability. DNA accessibility is regulated via a complex set of post-translational modifications of histones, also called histone code, and nucleosome remodeling. The protein is Late histone H2B.L3 of Strongylocentrotus purpuratus (Purple sea urchin).